A 59-amino-acid polypeptide reads, in one-letter code: Large ribosomal subunit protein uL30 (59 aa).

The protein belongs to the universal ribosomal protein uL30 family. In terms of assembly, part of the 50S ribosomal subunit.

This chain is Large ribosomal subunit protein uL30, found in Pectobacterium atrosepticum (strain SCRI 1043 / ATCC BAA-672) (Erwinia carotovora subsp. atroseptica).